Consider the following 378-residue polypeptide: Chloroplast stem-loop binding protein of 41 kDa b, chloroplastic (378 aa).

A chloroplast-targeting transit peptide spans 1-50; that stretch reads MAKMMMLQQHQPSFSLLTSSLSDFNGAKLHLQVQYKRKVHQPKGALYVSA. A Phosphoserine modification is found at serine 240.

The protein belongs to the NAD(P)-dependent epimerase/dehydratase family. As to quaternary structure, component of a complex made of CSP41A, CSP41B, ribosomes, and the plastid-encoded RNA polymerase. Interacts with CSP41A. Binds DNA when in complex with PRIN2. Highly expressed in seedlings, particularly in photosynthetically active organs. Mostly expressed in young and mature leaves, and, to a lower extent, in flowers. Low expression in etiolated seedlings compared to green seedlings.

It localises to the plastid. The protein resides in the chloroplast. The protein localises to the plastoglobule. Its subcellular location is the cytoplasm. Its function is as follows. Binds and cleaves RNA, particularly in stem-loops. Associates with pre-ribosomal particles in chloroplasts, and participates in chloroplast ribosomal RNA metabolism, probably during the final steps of 23S rRNA maturation. May enhance transcription by the plastid-encoded polymerase and translation in plastid via the stabilization of ribosome assembly intermediates. Required for chloroplast integrity. Involved in the regulation of the circadian system. Involved in the regulation of heteroglycans and monosaccharide mobilization. Required for full expression of genes transcribed by the plastid-encoded RNA polymerase (PEP). Essential for embryo development. This Arabidopsis thaliana (Mouse-ear cress) protein is Chloroplast stem-loop binding protein of 41 kDa b, chloroplastic (CSP41B).